Reading from the N-terminus, the 221-residue chain is MVDIKGMWKDLRATPVETLVRWQEQRFLWLLMAVAMGGLIILAHSFFQIYLYMAPCEQCVYIRFAMFVMVFGGLIAAINPKNIILKLIGCLAAFYGSIMGIKFSVKLNGIHYAVHNPDPDALFGVQGCSTDPTFPFGLPLAEWAPEWFRPTGDCGYDAPVVLTRNAQFCPAVVCGNVSALRRLVSDPALAFYEYGAGVPAGVWAMFCTVADYERRLGNQAD.

Residues 27–47 traverse the membrane as a helical segment; the sequence is FLWLLMAVAMGGLIILAHSFF. Cysteine 56 and cysteine 59 are joined by a disulfide. 2 helical membrane-spanning segments follow: residues 64–84 and 85–105; these read FAMF…KNII and LKLI…KFSV. An intrachain disulfide couples cysteine 128 to cysteine 154. Residues 189 to 209 form a helical membrane-spanning segment; that stretch reads LAFYEYGAGVPAGVWAMFCTV.

It belongs to the DsbB family. DsbI subfamily. In terms of assembly, interacts with DsbL.

The protein localises to the cell inner membrane. Its function is as follows. Required for disulfide bond formation in some proteins. Part of a redox system composed of DsbI and DsbL that mediates formation of an essential disulfide bond in AssT. This chain is Protein-disulfide oxidoreductase DsbI, found in Lelliottia amnigena (Enterobacter amnigenus).